The following is a 146-amino-acid chain: Hemoglobin subunit beta (146 aa).

Valine 1 carries the post-translational modification N-acetylvaline. The Globin domain occupies 2–146 (HLTGEEKSAV…VANALAHKYH (145 aa)). Phosphothreonine is present on threonine 12. Position 44 is a phosphoserine (serine 44). Lysine 59 is subject to N6-acetyllysine. Heme b is bound at residue histidine 63. Lysine 82 is subject to N6-acetyllysine. A heme b-binding site is contributed by histidine 92. Cysteine 93 carries the S-nitrosocysteine modification. Lysine 144 carries the N6-acetyllysine modification.

It belongs to the globin family. Heterotetramer of two alpha chains and two beta chains. In terms of tissue distribution, red blood cells.

In terms of biological role, involved in oxygen transport from the lung to the various peripheral tissues. The polypeptide is Hemoglobin subunit beta (HBB) (Saguinus mystax (Moustached tamarin)).